Reading from the N-terminus, the 398-residue chain is MKFVDEAPISVEAGKGGNGALSFRKEKFVAKGGPDGGDGGDGGSVFLVADENLNTLIDYRFQPKYRAEDGEKGASKNCTGAKGDDLLLPVPVGTTVIDMDTEEVFGDLTEHGQRLKVAQGGFHGLGNTRFKSSTNRVPRKTTPGTEGEKRNLKLELKVLADVGMLGLPNAGKSSFIRAVSSAKPKVADYPFTTLVPNLGVVKVQQHRSFVIADIPGLIEGASEGAGLGVRFLKHLTRCRLLLHMVDMAPVDGSNPVDNVRVIANELQKFSPTLSNRDRWLLLNKIDLLPIDEVEARCAAVVKELEWTGPVFRVSALKHEGTAELSGKIMDHLEAIWEEERENPDARALELERQNQMAAEARERIEELREARRQARLAAGEDDDFNEDDYDVEVIYVNY.

In terms of domain architecture, Obg spans 1 to 159 (MKFVDEAPIS…RNLKLELKVL (159 aa)). Positions 128–148 (TRFKSSTNRVPRKTTPGTEGE) are disordered. The 174-residue stretch at 160-333 (ADVGMLGLPN…LSGKIMDHLE (174 aa)) folds into the OBG-type G domain. Residues 166-173 (GLPNAGKS), 191-195 (FTTLV), 213-216 (DIPG), 283-286 (NKID), and 314-316 (SAL) contribute to the GTP site. Mg(2+) is bound by residues Ser173 and Thr193.

This sequence belongs to the TRAFAC class OBG-HflX-like GTPase superfamily. OBG GTPase family. In terms of assembly, monomer. Requires Mg(2+) as cofactor.

It is found in the cytoplasm. Its function is as follows. An essential GTPase which binds GTP, GDP and possibly (p)ppGpp with moderate affinity, with high nucleotide exchange rates and a fairly low GTP hydrolysis rate. Plays a role in control of the cell cycle, stress response, ribosome biogenesis and in those bacteria that undergo differentiation, in morphogenesis control. The protein is GTPase Obg of Cellvibrio japonicus (strain Ueda107) (Pseudomonas fluorescens subsp. cellulosa).